Consider the following 639-residue polypeptide: AP2-like ethylene-responsive transcription factor CRL5 (639 aa).

2 disordered regions span residues 25-59 (PHMA…QQQH) and 258-277 (GRKR…HHRK). The span at 43 to 59 (QQQQQQQQQQHHQQQQH) shows a compositional bias: low complexity. 2 consecutive DNA-binding regions (AP2/ERF) follow at residues 288–351 (QYRG…INFP) and 387–445 (MYRG…TNFD). Residues 547-561 (QQQQQHMSMSAASSL) are compositionally biased toward low complexity. Residues 547-579 (QQQQQHMSMSAASSLVTSLSNSREGSPDRGGGL) form a disordered region.

This sequence belongs to the AP2/ERF transcription factor family. AP2 subfamily. In terms of tissue distribution, highly expressed at the base of the stem. Expressed in stems. Expressed a low levels in crown roots and seeds. Expressed in the stem region where adventitious (crown) root initiation occurs.

The protein localises to the nucleus. Acts as a positive regulator of adventitious (crown) root formation by promoting its initiation. Promotes adventitious root initiation through repression of cytokinin signaling by positively regulating the two-component response regulator RR1. Regulated by the auxin response factor and transcriptional activator ARF23/ARF1. The protein is AP2-like ethylene-responsive transcription factor CRL5 of Oryza sativa subsp. japonica (Rice).